An 800-amino-acid polypeptide reads, in one-letter code: Phenylalanine--tRNA ligase beta subunit (800 aa).

Residues threonine 39 to leucine 154 form the tRNA-binding domain. A B5 domain is found at alanine 408 to serine 483. The Mg(2+) site is built by aspartate 461, aspartate 467, glutamate 470, and glutamate 471. The region spanning proline 708–arginine 800 is the FDX-ACB domain.

Belongs to the phenylalanyl-tRNA synthetase beta subunit family. Type 1 subfamily. As to quaternary structure, tetramer of two alpha and two beta subunits. The cofactor is Mg(2+).

It is found in the cytoplasm. The enzyme catalyses tRNA(Phe) + L-phenylalanine + ATP = L-phenylalanyl-tRNA(Phe) + AMP + diphosphate + H(+). This chain is Phenylalanine--tRNA ligase beta subunit, found in Staphylococcus aureus (strain Mu50 / ATCC 700699).